Consider the following 656-residue polypeptide: Pyoverdine export ATP-binding/permease protein PvdT (656 aa).

The region spanning 6-245 (IDLRAIRKSY…SANPAALQAV (240 aa)) is the ABC transporter domain. An ATP-binding site is contributed by 43–50 (GASGSGKS). The next 4 helical transmembrane spans lie at 284 to 304 (ALTLLGIVIGVASVVVMLAVG), 538 to 558 (IAAISLLVGGIGVMNIMLMTV), 589 to 609 (LSVVGGLAGVVLALGMGAALL), and 619 to 639 (VPAVAGAFACALVTGVIFGFM).

This sequence belongs to the ABC transporter superfamily. Macrolide exporter (TC 3.A.1.122) family. In terms of assembly, part of the tripartite efflux system PvdRT-OpmQ, which is composed of an inner membrane component with both ATPase and permease domains, PvdT, a periplasmic membrane fusion protein, PvdR, and an outer membrane component, OpmQ.

It localises to the cell inner membrane. Functionally, part of the tripartite efflux system PvdRT-OpmQ required for the secretion into the extracellular milieu of the siderophore pyoverdine (PVD), which is involved in iron acquisition. This subunit binds PVD and drives its secretion by hydrolyzing ATP. The system is responsible for export of newly synthesized PVD after the final steps of biosynthesis have taken place in the periplasm. It is also responsible for recycling of PVD after internalization of ferri-PVD into the periplasm by the outer-membrane receptor FpvA and release of iron from PVD, thus making PVD available for new cycles of iron uptake. The polypeptide is Pyoverdine export ATP-binding/permease protein PvdT (Pseudomonas savastanoi pv. phaseolicola (strain 1448A / Race 6) (Pseudomonas syringae pv. phaseolicola (strain 1448A / Race 6))).